We begin with the raw amino-acid sequence, 462 residues long: 3-deoxy-D-manno-octulosonic acid transferase (462 aa).

Residues 2 to 22 (MLLYYILSFILLPVYFIIIFI) form a helical; Signal-anchor membrane-spanning segment. Residues 47–90 (SLLDLQMSVNQEGFKVDTEHKATSYVYIHRNASLMYKLSLERSY) enclose the RPE1 insert domain. The active-site Proton acceptor is glutamate 104. CMP-binding positions include 308–309 (PR), 349–351 (FGE), and 374–377 (NILE).

Belongs to the glycosyltransferase group 1 family.

The protein resides in the cell inner membrane. The enzyme catalyses lipid IVA (E. coli) + CMP-3-deoxy-beta-D-manno-octulosonate = alpha-Kdo-(2-&gt;6)-lipid IVA (E. coli) + CMP + H(+). It participates in bacterial outer membrane biogenesis; LPS core biosynthesis. Functionally, involved in lipopolysaccharide (LPS) biosynthesis. Catalyzes the transfer of 3-deoxy-D-manno-octulosonate (Kdo) residue(s) from CMP-Kdo to lipid IV(A), the tetraacyldisaccharide-1,4'-bisphosphate precursor of lipid A. The sequence is that of 3-deoxy-D-manno-octulosonic acid transferase (waaA) from Rickettsia typhi (strain ATCC VR-144 / Wilmington).